A 311-amino-acid chain; its full sequence is MTAEVFDPRALRDAFGAFATGVTVVTASDAAGKPIGFTANSFTSVSLDPPLLLVCLAKSSRNYESMTSAGRFAINVLSETQKDVSNTFARPVEDRFAAVDWRLGRDGCPIFSDVAAWFECSMQDIIEAGDHVIIIGRVTAFENSGLNGLGYARGGYFTPRLAGKAVSAAVEGEIRLGAVLEQQGAVFLAGNETLSLPNCTVEGGDPARTLAAYLEQLTGLNVTIGFLYSVYEDKSDGRQNIVYHALASDGAPRQGRFLRPAELAAAKFSSSATADIINRFVLESSIGNFGIYFGDETGGTVHPIANKDAHS.

FMN is bound by residues 38–41 (TANS), 55–61 (CLAKSSR), 88–89 (FA), and R95.

It belongs to the non-flavoprotein flavin reductase family.

This is Probable flavin reductase from Rhizobium meliloti (strain 1021) (Ensifer meliloti).